Consider the following 237-residue polypeptide: Ribonuclease PH (237 aa).

Phosphate is bound by residues Arg86 and Gly124 to Arg126.

It belongs to the RNase PH family. In terms of assembly, homohexameric ring arranged as a trimer of dimers.

It carries out the reaction tRNA(n+1) + phosphate = tRNA(n) + a ribonucleoside 5'-diphosphate. Functionally, phosphorolytic 3'-5' exoribonuclease that plays an important role in tRNA 3'-end maturation. Removes nucleotide residues following the 3'-CCA terminus of tRNAs; can also add nucleotides to the ends of RNA molecules by using nucleoside diphosphates as substrates, but this may not be physiologically important. Probably plays a role in initiation of 16S rRNA degradation (leading to ribosome degradation) during starvation. The polypeptide is Ribonuclease PH (Shewanella woodyi (strain ATCC 51908 / MS32)).